Here is a 504-residue protein sequence, read N- to C-terminus: Probable cytosol aminopeptidase (504 aa).

Lys-274 and Asp-279 together coordinate Mn(2+). The active site involves Lys-286. 3 residues coordinate Mn(2+): Asp-297, Asp-356, and Glu-358. Residue Arg-360 is part of the active site.

Belongs to the peptidase M17 family. It depends on Mn(2+) as a cofactor.

The protein resides in the cytoplasm. The catalysed reaction is Release of an N-terminal amino acid, Xaa-|-Yaa-, in which Xaa is preferably Leu, but may be other amino acids including Pro although not Arg or Lys, and Yaa may be Pro. Amino acid amides and methyl esters are also readily hydrolyzed, but rates on arylamides are exceedingly low.. It carries out the reaction Release of an N-terminal amino acid, preferentially leucine, but not glutamic or aspartic acids.. Presumably involved in the processing and regular turnover of intracellular proteins. Catalyzes the removal of unsubstituted N-terminal amino acids from various peptides. This Gloeobacter violaceus (strain ATCC 29082 / PCC 7421) protein is Probable cytosol aminopeptidase.